The primary structure comprises 414 residues: 5-aminolevulinate synthase (414 aa).

Substrate contacts are provided by Arg22, Ser133, and Lys152. Pyridoxal 5'-phosphate-binding residues include Ser185, His213, and Thr241. Residue Lys244 is part of the active site. Lys244 is modified (N6-(pyridoxal phosphate)lysine). Positions 273 and 274 each coordinate pyridoxal 5'-phosphate. Thr359 lines the substrate pocket.

The protein belongs to the class-II pyridoxal-phosphate-dependent aminotransferase family. Homodimer. Requires pyridoxal 5'-phosphate as cofactor.

The enzyme catalyses succinyl-CoA + glycine + H(+) = 5-aminolevulinate + CO2 + CoA. The protein operates within porphyrin-containing compound metabolism; protoporphyrin-IX biosynthesis; 5-aminolevulinate from glycine: step 1/1. This Rickettsia felis (strain ATCC VR-1525 / URRWXCal2) (Rickettsia azadi) protein is 5-aminolevulinate synthase (hemA).